Here is a 265-residue protein sequence, read N- to C-terminus: NAD kinase 1 (265 aa).

Asp-45 functions as the Proton acceptor in the catalytic mechanism. Residues 45-46, 122-123, Arg-148, Asp-150, and Ala-185 each bind NAD(+); these read DG and NE.

The protein belongs to the NAD kinase family. It depends on a divalent metal cation as a cofactor.

The protein localises to the cytoplasm. It catalyses the reaction NAD(+) + ATP = ADP + NADP(+) + H(+). Its function is as follows. Involved in the regulation of the intracellular balance of NAD and NADP, and is a key enzyme in the biosynthesis of NADP. Catalyzes specifically the phosphorylation on 2'-hydroxyl of the adenosine moiety of NAD to yield NADP. This chain is NAD kinase 1, found in Bacillus anthracis.